Consider the following 252-residue polypeptide: Geranylgeranylglyceryl phosphate synthase (252 aa).

Positions 27 and 56 each coordinate Mg(2+). Sn-glycerol 1-phosphate-binding positions include 175–181 (YLEAGSG), 206–207 (GG), and 228–229 (GT).

Belongs to the GGGP/HepGP synthase family. Group II subfamily. Mg(2+) is required as a cofactor.

Its subcellular location is the cytoplasm. It carries out the reaction sn-glycerol 1-phosphate + (2E,6E,10E)-geranylgeranyl diphosphate = sn-3-O-(geranylgeranyl)glycerol 1-phosphate + diphosphate. The protein operates within membrane lipid metabolism; glycerophospholipid metabolism. Prenyltransferase that catalyzes the transfer of the geranylgeranyl moiety of geranylgeranyl diphosphate (GGPP) to the C3 hydroxyl of sn-glycerol-1-phosphate (G1P). This reaction is the first ether-bond-formation step in the biosynthesis of archaeal membrane lipids. This Pyrococcus abyssi (strain GE5 / Orsay) protein is Geranylgeranylglyceryl phosphate synthase.